A 223-amino-acid chain; its full sequence is Translation initiation factor 6 (223 aa).

Belongs to the eIF-6 family.

Functionally, binds to the 50S ribosomal subunit and prevents its association with the 30S ribosomal subunit to form the 70S initiation complex. In Saccharolobus islandicus (strain M.16.27) (Sulfolobus islandicus), this protein is Translation initiation factor 6.